A 217-amino-acid chain; its full sequence is Protein 33K (217 aa).

The interval 1 to 142 is disordered; sequence MPPKGNKQAI…KEKTSAIATR (142 aa). Residues 24–68 show a composition bias toward acidic residues; sequence QWDEEEESWDDSQAEEVSDEEEMESWESLDEELEDKPPKDEEEEI. Over residues 69–78 the composition is skewed to low complexity; the sequence is IASAAAPSSK. A compositionally biased stretch (basic and acidic residues) spans 123–136; that stretch reads KRSEKTTRPRKEKT. Positions 160-187 are necessary for nuclear subcellular location; that stretch reads YAIFQQSRGQQLELKVKNRSLRSLTRSC. The RS-repeat; required for splicing enhancer activity stretch occupies residues 166–186; the sequence is SRGQQLELKVKNRSLRSLTRS.

Belongs to the adenoviridae splicing factor family. Homooligomer. Interacts with DBP; this interaction occurs at a unique vertex during genome packaging. Interacts with IVa2; this interaction occurs at a unique vertex during genome packaging and seems to potentiate IVa2 and 33K oligomerization. Phosphorylated in vitro by human PKA and PRKDC. PRKDC inhibits, whereas PKA activates the splicing factor.

The protein resides in the host nucleus. Promotes alternative splicing of late transcripts by promoting splicing at weak 3' splice sites. Required for the temporal activation of major late pre-mRNA splicing at late times of infection. Induces the splicing and expression of the late capsid vertex protein. In terms of biological role, probably functions as the small terminase that is part of the molecular motor that translocates genomic DNA in empty capsid during DNA packaging. This motor is located at a unique vertex and comprises at least the IVa2 ATPase, the small terminase 33K and probably a portal. Forms a ring-like structure of about 17 nm in which genomic DNA is translocated into the capsid. Stimulates IVa2 ATPase activity in the presence of the viral genome. Once the DNA is packaged, the terminase detaches: the 33K protein is present in the empty particles, but not in the mature virions. Also involved in virion assembly. The sequence is that of Protein 33K from Human adenovirus F serotype 41 (HAdV-41).